Reading from the N-terminus, the 715-residue chain is Probable serine/threonine-protein kinase mkcE (715 aa).

Disordered stretches follow at residues 1-125 (MQKI…SQHQ), 228-330 (QLQQ…TTTT), and 366-385 (GVDN…PIQP). Positions 42-53 (YDGGGSGSGSGG) are enriched in gly residues. 2 stretches are compositionally biased toward low complexity: residues 54-70 (SSSN…TGGN) and 80-125 (SPSN…SQHQ). The stretch at 207–241 (TGKKNFQQQQLQQLQQQQQQQQLQQQQHQQHNHQI) forms a coiled coil. The segment covering 367–378 (VDNLSSTTTSLS) has biased composition (low complexity). A Protein kinase domain is found at 427–683 (RIGENAEVKG…PTQLLQHPFI (257 aa)). ATP contacts are provided by residues 433 to 441 (EVKGAFGTV) and Lys-459. Asp-550 serves as the catalytic Proton acceptor.

It belongs to the protein kinase superfamily. STE Ser/Thr protein kinase family. STE20 subfamily. Mg(2+) serves as cofactor.

It catalyses the reaction L-seryl-[protein] + ATP = O-phospho-L-seryl-[protein] + ADP + H(+). The catalysed reaction is L-threonyl-[protein] + ATP = O-phospho-L-threonyl-[protein] + ADP + H(+). The polypeptide is Probable serine/threonine-protein kinase mkcE (Dictyostelium discoideum (Social amoeba)).